A 556-amino-acid polypeptide reads, in one-letter code: Large cysteine-rich periplasmic protein OmcB (556 aa).

An N-terminal signal peptide occupies residues 1–22; that stretch reads MSKLIRRVVTVLALTSMASCFA. Residues 23–40 constitute a propeptide that is removed on maturation; the sequence is SGGIEAAVAESLITKIVA.

In terms of assembly, part of a disulfide cross-linked outer membrane complex (COMC) composed of the major outer membrane porin (MOMP), the small cysteine-rich protein (OmcA) and the large cysteine-rich periplasmic protein (OmcB).

Its subcellular location is the periplasm. Functionally, in elementary bodies (EBs, the infectious stage, which is able to survive outside the host cell) provides the structural integrity of the outer envelope through disulfide cross-links with the small cysteine-rich protein and the major outer membrane porin. It has been described in publications as the Sarkosyl-insoluble COMC (Chlamydia outer membrane complex), and serves as the functional equivalent of peptidoglycan. The chain is Large cysteine-rich periplasmic protein OmcB (omcB) from Chlamydia pneumoniae (Chlamydophila pneumoniae).